Consider the following 361-residue polypeptide: tRNA/tmRNA (uracil-C(5))-methyltransferase (361 aa).

The S-adenosyl-L-methionine site is built by Gln183, Tyr211, Asn216, Glu232, and Asp294. Catalysis depends on Cys319, which acts as the Nucleophile. Glu353 functions as the Proton acceptor in the catalytic mechanism.

This sequence belongs to the class I-like SAM-binding methyltransferase superfamily. RNA M5U methyltransferase family. TrmA subfamily.

The catalysed reaction is uridine(54) in tRNA + S-adenosyl-L-methionine = 5-methyluridine(54) in tRNA + S-adenosyl-L-homocysteine + H(+). It carries out the reaction uridine(341) in tmRNA + S-adenosyl-L-methionine = 5-methyluridine(341) in tmRNA + S-adenosyl-L-homocysteine + H(+). In terms of biological role, dual-specificity methyltransferase that catalyzes the formation of 5-methyluridine at position 54 (m5U54) in all tRNAs, and that of position 341 (m5U341) in tmRNA (transfer-mRNA). The sequence is that of tRNA/tmRNA (uracil-C(5))-methyltransferase from Acinetobacter baumannii (strain ACICU).